The sequence spans 189 residues: MQHPASGESWLARPPRTAERRLRPWLTDPASLTARIRMRCGMFGVRVLRQSAGALTPDERRLLGLRAGERALLREVLLIADGRPVVFARSVLAQREQRGGWLRLWRGIGSRPLGAALFSDPRIRRQPLACARIGAADARYHLARRALAGAATLPPALWARRSVFRLHGRSLLVSEFFLPAILGLPDDPL.

Substrate contacts are provided by Arg74, Leu113, and Glu175.

It belongs to the UbiC family.

The protein resides in the cytoplasm. It carries out the reaction chorismate = 4-hydroxybenzoate + pyruvate. It participates in cofactor biosynthesis; ubiquinone biosynthesis. In terms of biological role, removes the pyruvyl group from chorismate, with concomitant aromatization of the ring, to provide 4-hydroxybenzoate (4HB) for the ubiquinone pathway. This chain is Probable chorismate pyruvate-lyase, found in Azoarcus sp. (strain BH72).